Here is a 35-residue protein sequence, read N- to C-terminus: Cytochrome b6-f complex subunit 7 (35 aa).

The chain crosses the membrane as a helical span at residues 9–27 (AGLSIVLTLVGVALGYGIL).

It belongs to the PetM family. In terms of assembly, the 4 large subunits of the cytochrome b6-f complex are cytochrome b6, subunit IV (17 kDa polypeptide, PetD), cytochrome f and the Rieske protein, while the 4 small subunits are PetG, PetL, PetM and PetN. The complex functions as a dimer.

The protein resides in the cellular thylakoid membrane. Functionally, component of the cytochrome b6-f complex, which mediates electron transfer between photosystem II (PSII) and photosystem I (PSI), cyclic electron flow around PSI, and state transitions. This Synechococcus sp. (strain JA-3-3Ab) (Cyanobacteria bacterium Yellowstone A-Prime) protein is Cytochrome b6-f complex subunit 7.